Here is a 195-residue protein sequence, read N- to C-terminus: Calcineurin B homologous protein 1 (195 aa).

Gly2 carries the N-myristoyl glycine lipid modification. EF-hand domains are found at residues 26–61 (SQIT…AINP), 66–101 (IINA…KSKD), 110–145 (SRSN…MVGV), and 151–186 (QLGS…VDVE). Ca(2+) contacts are provided by Asp123, Asp125, Asp127, Lys129, Glu134, Asp164, Asp166, Asp168, and Glu175.

Belongs to the calcineurin regulatory subunit family. CHP subfamily. Monomer. In terms of processing, phosphorylated. Post-translationally, calcium-binding or N-myristoylation are necessary for the Na(+)/H(+) exchange activities.

Its subcellular location is the nucleus. It is found in the cytoplasm. The protein resides in the cytoskeleton. The protein localises to the endomembrane system. It localises to the endoplasmic reticulum-Golgi intermediate compartment. Its subcellular location is the endoplasmic reticulum. It is found in the cell membrane. The protein resides in the membrane. Functionally, calcium-binding protein involved in different processes such as regulation of vesicular trafficking, plasma membrane Na(+)/H(+) exchanger and gene transcription. Involved in the constitutive exocytic membrane traffic. Mediates the association between microtubules and membrane-bound organelles of the endoplasmic reticulum and Golgi apparatus and is also required for the targeting and fusion of transcytotic vesicles (TCV) with the plasma membrane. Functions as an integral cofactor in cell pH regulation by controlling plasma membrane-type Na(+)/H(+) exchange activity. Inhibits serum- and GTPase-stimulated Na(+)/H(+) exchange. Plays a role as an inhibitor of ribosomal RNA transcription. Acts as a negative regulator of the calcineurin/NFAT signaling pathway. The polypeptide is Calcineurin B homologous protein 1 (CHP1) (Gallus gallus (Chicken)).